Reading from the N-terminus, the 287-residue chain is Undecaprenyl-diphosphatase (287 aa).

Helical transmembrane passes span 1–21 (MALW…FLPV), 49–69 (MILF…VVFA), 101–121 (LFLL…TLKA), 126–146 (VFAN…LLFW), 160–180 (TGVG…MPGL), 203–223 (YSFF…AIEV), 232–252 (VSVA…IVSL), and 267–287 (FSFY…DLPI).

This sequence belongs to the UppP family.

Its subcellular location is the cell inner membrane. The enzyme catalyses di-trans,octa-cis-undecaprenyl diphosphate + H2O = di-trans,octa-cis-undecaprenyl phosphate + phosphate + H(+). Functionally, catalyzes the dephosphorylation of undecaprenyl diphosphate (UPP). Confers resistance to bacitracin. The polypeptide is Undecaprenyl-diphosphatase (Halorhodospira halophila (strain DSM 244 / SL1) (Ectothiorhodospira halophila (strain DSM 244 / SL1))).